We begin with the raw amino-acid sequence, 232 residues long: Ribosomal RNA small subunit methyltransferase G (232 aa).

S-adenosyl-L-methionine-binding positions include G93, L98, 144–145 (VE), and R163.

It belongs to the methyltransferase superfamily. RNA methyltransferase RsmG family.

The protein resides in the cytoplasm. The enzyme catalyses guanosine(527) in 16S rRNA + S-adenosyl-L-methionine = N(7)-methylguanosine(527) in 16S rRNA + S-adenosyl-L-homocysteine. Specifically methylates the N7 position of guanine in position 527 of 16S rRNA. In Burkholderia pseudomallei (strain 668), this protein is Ribosomal RNA small subunit methyltransferase G.